A 46-amino-acid polypeptide reads, in one-letter code: Large ribosomal subunit protein bL36 (46 aa).

This sequence belongs to the bacterial ribosomal protein bL36 family.

The chain is Large ribosomal subunit protein bL36 from Photorhabdus laumondii subsp. laumondii (strain DSM 15139 / CIP 105565 / TT01) (Photorhabdus luminescens subsp. laumondii).